A 934-amino-acid polypeptide reads, in one-letter code: Bifunctional uridylyltransferase/uridylyl-removing enzyme (934 aa).

Residues 1 to 379 are uridylyltransferase; the sequence is MSAHDLKLEE…TFSRRKRKLS (379 aa). Residues 380–736 are uridylyl-removing; it reads DDGAFISENH…AKPHAFEAVT (357 aa). Positions 496–613 constitute an HD domain; sequence VDEHLLRCIA…IDFADTVQTM (118 aa). ACT domains are found at residues 737 to 818 and 848 to 931; these read EITV…DMLA and VIEV…RSPQ.

This sequence belongs to the GlnD family. The cofactor is Mg(2+).

It catalyses the reaction [protein-PII]-L-tyrosine + UTP = [protein-PII]-uridylyl-L-tyrosine + diphosphate. It carries out the reaction [protein-PII]-uridylyl-L-tyrosine + H2O = [protein-PII]-L-tyrosine + UMP + H(+). Its activity is regulated as follows. Uridylyltransferase (UTase) activity is inhibited by glutamine, while glutamine activates uridylyl-removing (UR) activity. In terms of biological role, modifies, by uridylylation and deuridylylation, the PII regulatory proteins (GlnB and homologs), in response to the nitrogen status of the cell that GlnD senses through the glutamine level. Under low glutamine levels, catalyzes the conversion of the PII proteins and UTP to PII-UMP and PPi, while under higher glutamine levels, GlnD hydrolyzes PII-UMP to PII and UMP (deuridylylation). Thus, controls uridylylation state and activity of the PII proteins, and plays an important role in the regulation of nitrogen assimilation and metabolism. The polypeptide is Bifunctional uridylyltransferase/uridylyl-removing enzyme (Brucella abortus (strain S19)).